Here is a 169-residue protein sequence, read N- to C-terminus: MICOS complex subunit MIC19 (169 aa).

Gly2 is lipidated: N-myristoyl glycine. Residues 123–165 (ENVCQDNENEIVRCLQENPGRVLKCAPLTEAFEKCVGEFRQQV) enclose the CHCH domain. 2 short sequence motifs (cx9C motif) span residues 126–136 (CQDNENEIVRC) and 147–157 (CAPLTEAFEKC). 2 disulfides stabilise this stretch: Cys126–Cys157 and Cys136–Cys147.

The protein belongs to the MICOS complex subunit Mic19 family. Metazoan Mic19 subfamily. In terms of assembly, component of the mitochondrial contact site and cristae organizing system (MICOS) complex.

The protein resides in the mitochondrion inner membrane. Functionally, plays a role in maintaining mitochondrial morphology. May act as a component of the MICOS complex, a large protein complex of the mitochondria. This is MICOS complex subunit MIC19 from Caenorhabditis elegans.